An 87-amino-acid polypeptide reads, in one-letter code: Small ribosomal subunit protein bS20 (87 aa).

Residues methionine 1–serine 26 form a disordered region.

It belongs to the bacterial ribosomal protein bS20 family.

Functionally, binds directly to 16S ribosomal RNA. The chain is Small ribosomal subunit protein bS20 from Salmonella typhi.